Consider the following 165-residue polypeptide: E3 ubiquitin-protein ligase RNF181 (165 aa).

The segment at 88–129 adopts an RING-type; atypical zinc-finger fold; sequence CPVCLLEFEEEETVIEMPCHHLFHSNCILPWLSKTNSCPLCR. The tract at residues 136 to 165 is disordered; the sequence is DDSYEEHKKDKARRQQQQHRLENLHGAMYT. Phosphothreonine is present on Thr-165.

Belongs to the RNF181 family. In terms of assembly, directly interacts with ITGA2B and, as a result, with integrin ITGA2B/ITGB3. There is no evidence that integrin ITGA2B/ITGB3 is an endogenous substrate for RNF181-directed ubiquitination. In terms of processing, auto-ubiquitinated as part of the enzymatic reaction.

It catalyses the reaction S-ubiquitinyl-[E2 ubiquitin-conjugating enzyme]-L-cysteine + [acceptor protein]-L-lysine = [E2 ubiquitin-conjugating enzyme]-L-cysteine + N(6)-ubiquitinyl-[acceptor protein]-L-lysine.. It participates in protein modification; protein ubiquitination. Functionally, E3 ubiquitin-protein ligase which accepts ubiquitin from an E2 ubiquitin-conjugating enzyme in the form of a thioester and then directly transfers the ubiquitin to targeted substrates. Catalyzes monoubiquitination of 26S proteasome subunit PSMC2/RPT1. The protein is E3 ubiquitin-protein ligase RNF181 (Rnf181) of Rattus norvegicus (Rat).